Reading from the N-terminus, the 72-residue chain is Small, acid-soluble spore protein C (72 aa).

Belongs to the alpha/beta-type SASP family.

Functionally, SASP are bound to spore DNA. They are double-stranded DNA-binding proteins that cause DNA to change to an a-like conformation. They protect the DNA backbone from chemical and enzymatic cleavage and are thus involved in dormant spore's high resistance to UV light. The polypeptide is Small, acid-soluble spore protein C (sasP-C) (Priestia megaterium (Bacillus megaterium)).